A 379-amino-acid chain; its full sequence is Cell division protein FtsZ (379 aa).

GTP contacts are provided by residues 18–22 (GGGVN), 105–107 (GTG), E136, R140, and D184.

This sequence belongs to the FtsZ family. In terms of assembly, homodimer. Polymerizes to form a dynamic ring structure in a strictly GTP-dependent manner. Interacts directly with several other division proteins.

Its subcellular location is the cytoplasm. Functionally, essential cell division protein that forms a contractile ring structure (Z ring) at the future cell division site. The regulation of the ring assembly controls the timing and the location of cell division. One of the functions of the FtsZ ring is to recruit other cell division proteins to the septum to produce a new cell wall between the dividing cells. Binds GTP and shows GTPase activity. The chain is Cell division protein FtsZ from Mycobacterium leprae (strain TN).